Here is a 292-residue protein sequence, read N- to C-terminus: Universal stress protein Mb2346c (292 aa).

This sequence belongs to the universal stress protein A family.

The protein is Universal stress protein Mb2346c of Mycobacterium bovis (strain ATCC BAA-935 / AF2122/97).